A 120-amino-acid chain; its full sequence is Large ribosomal subunit protein eL34 (120 aa).

The protein belongs to the eukaryotic ribosomal protein eL34 family.

The polypeptide is Large ribosomal subunit protein eL34 (RPL34) (Pisum sativum (Garden pea)).